The primary structure comprises 167 residues: Transcription antitermination protein NusB (167 aa).

Residues methionine 1–asparagine 21 are disordered.

It belongs to the NusB family.

Involved in transcription antitermination. Required for transcription of ribosomal RNA (rRNA) genes. Binds specifically to the boxA antiterminator sequence of the ribosomal RNA (rrn) operons. The polypeptide is Transcription antitermination protein NusB (Nitrosomonas eutropha (strain DSM 101675 / C91 / Nm57)).